The chain runs to 499 residues: Glycerol kinase (499 aa).

An ADP-binding site is contributed by T12. T12, T13, and S14 together coordinate ATP. Position 12 (T12) interacts with sn-glycerol 3-phosphate. R16 lines the ADP pocket. Positions 82, 83, and 134 each coordinate sn-glycerol 3-phosphate. Glycerol is bound by residues R82, E83, and Y134. Phosphohistidine; by HPr is present on H230. A sn-glycerol 3-phosphate-binding site is contributed by D244. Residues D244 and Q245 each coordinate glycerol. Residues T266 and G309 each contribute to the ADP site. ATP-binding residues include T266, G309, Q313, and G410. Residues G410 and N414 each contribute to the ADP site.

The protein belongs to the FGGY kinase family. Homotetramer and homodimer (in equilibrium). Post-translationally, the phosphoenolpyruvate-dependent sugar phosphotransferase system (PTS), including enzyme I, and histidine-containing protein (HPr) are required for the phosphorylation, which leads to the activation of the enzyme.

It carries out the reaction glycerol + ATP = sn-glycerol 3-phosphate + ADP + H(+). The protein operates within polyol metabolism; glycerol degradation via glycerol kinase pathway; sn-glycerol 3-phosphate from glycerol: step 1/1. Its activity is regulated as follows. Activated by phosphorylation and inhibited by fructose 1,6-bisphosphate (FBP). Its function is as follows. Key enzyme in the regulation of glycerol uptake and metabolism. Catalyzes the phosphorylation of glycerol to yield sn-glycerol 3-phosphate. The polypeptide is Glycerol kinase (Staphylococcus epidermidis (strain ATCC 12228 / FDA PCI 1200)).